A 320-amino-acid chain; its full sequence is 4-hydroxy-3-methylbut-2-enyl diphosphate reductase (320 aa).

Cysteine 12 serves as a coordination point for [4Fe-4S] cluster. 2 residues coordinate (2E)-4-hydroxy-3-methylbut-2-enyl diphosphate: histidine 41 and histidine 74. The dimethylallyl diphosphate site is built by histidine 41 and histidine 74. Isopentenyl diphosphate-binding residues include histidine 41 and histidine 74. Cysteine 96 lines the [4Fe-4S] cluster pocket. Residue histidine 124 participates in (2E)-4-hydroxy-3-methylbut-2-enyl diphosphate binding. Position 124 (histidine 124) interacts with dimethylallyl diphosphate. Residue histidine 124 participates in isopentenyl diphosphate binding. The active-site Proton donor is the glutamate 126. Threonine 167 is a binding site for (2E)-4-hydroxy-3-methylbut-2-enyl diphosphate. Cysteine 197 provides a ligand contact to [4Fe-4S] cluster. (2E)-4-hydroxy-3-methylbut-2-enyl diphosphate contacts are provided by serine 225, serine 226, asparagine 227, and serine 269. Dimethylallyl diphosphate is bound by residues serine 225, serine 226, asparagine 227, and serine 269. Residues serine 225, serine 226, asparagine 227, and serine 269 each contribute to the isopentenyl diphosphate site.

The protein belongs to the IspH family. The cofactor is [4Fe-4S] cluster.

The catalysed reaction is isopentenyl diphosphate + 2 oxidized [2Fe-2S]-[ferredoxin] + H2O = (2E)-4-hydroxy-3-methylbut-2-enyl diphosphate + 2 reduced [2Fe-2S]-[ferredoxin] + 2 H(+). It catalyses the reaction dimethylallyl diphosphate + 2 oxidized [2Fe-2S]-[ferredoxin] + H2O = (2E)-4-hydroxy-3-methylbut-2-enyl diphosphate + 2 reduced [2Fe-2S]-[ferredoxin] + 2 H(+). It participates in isoprenoid biosynthesis; dimethylallyl diphosphate biosynthesis; dimethylallyl diphosphate from (2E)-4-hydroxy-3-methylbutenyl diphosphate: step 1/1. It functions in the pathway isoprenoid biosynthesis; isopentenyl diphosphate biosynthesis via DXP pathway; isopentenyl diphosphate from 1-deoxy-D-xylulose 5-phosphate: step 6/6. Functionally, catalyzes the conversion of 1-hydroxy-2-methyl-2-(E)-butenyl 4-diphosphate (HMBPP) into a mixture of isopentenyl diphosphate (IPP) and dimethylallyl diphosphate (DMAPP). Acts in the terminal step of the DOXP/MEP pathway for isoprenoid precursor biosynthesis. The sequence is that of 4-hydroxy-3-methylbut-2-enyl diphosphate reductase from Francisella tularensis subsp. novicida (strain U112).